We begin with the raw amino-acid sequence, 99 residues long: Small ribosomal subunit protein eS24 (99 aa).

This sequence belongs to the eukaryotic ribosomal protein eS24 family.

The chain is Small ribosomal subunit protein eS24 from Pyrococcus abyssi (strain GE5 / Orsay).